A 396-amino-acid chain; its full sequence is MPEGALRNFTINFGPQHPAAHGVLRLVLELDGEVVERVDPHIGLLHRGTEKLIEQKTYLQAIPYFDRLDYVAPMNQEHAFCLAAEKLLGIAVPRRAQLIRVLYCEIGRILSHLLNVTTQAMDVGALTPPLWGFEEREKLMVFYERASGSRMHAAYFRIGGVHQDLPPQLIEDIETWCDAFPQVVDDLDRLLTGNRIFKQRNVDIGVVTLPQAWEWGFSGVMVRGSGAAWDLRKSQPYECYAEMDFDVPIGKNGDCYDRYLLRMEEMRQSVSIMKQCIAKLRAPDGQGPVALEDHKIVPPRRGEMKRSMEALIHHFKLYTEGFRVPAGEVYVAVEAPKGEFGVFLVSDGTNKPYKCKIRAPGFAHLQAMDFVTRGHLLADVSAILGSLDIVFGEVDR.

The protein belongs to the complex I 49 kDa subunit family. In terms of assembly, NDH-1 is composed of 14 different subunits. Subunits NuoB, C, D, E, F, and G constitute the peripheral sector of the complex.

It is found in the cell inner membrane. The enzyme catalyses a quinone + NADH + 5 H(+)(in) = a quinol + NAD(+) + 4 H(+)(out). Functionally, NDH-1 shuttles electrons from NADH, via FMN and iron-sulfur (Fe-S) centers, to quinones in the respiratory chain. The immediate electron acceptor for the enzyme in this species is believed to be ubiquinone. Couples the redox reaction to proton translocation (for every two electrons transferred, four hydrogen ions are translocated across the cytoplasmic membrane), and thus conserves the redox energy in a proton gradient. This Rhodopseudomonas palustris (strain BisA53) protein is NADH-quinone oxidoreductase subunit D.